The chain runs to 505 residues: 2,3-bisphosphoglycerate-independent phosphoglycerate mutase (505 aa).

Mn(2+)-binding residues include Asp11 and Ser61. Ser61 serves as the catalytic Phosphoserine intermediate. Residues His122, 152–153, Arg184, Arg190, 258–261, and Lys331 each bind substrate; these read RD and RPDR. Positions 396, 400, 437, 438, and 455 each coordinate Mn(2+).

This sequence belongs to the BPG-independent phosphoglycerate mutase family. Monomer. Requires Mn(2+) as cofactor.

The catalysed reaction is (2R)-2-phosphoglycerate = (2R)-3-phosphoglycerate. It participates in carbohydrate degradation; glycolysis; pyruvate from D-glyceraldehyde 3-phosphate: step 3/5. Functionally, catalyzes the interconversion of 2-phosphoglycerate and 3-phosphoglycerate. The protein is 2,3-bisphosphoglycerate-independent phosphoglycerate mutase of Mesomycoplasma hyopneumoniae (strain J / ATCC 25934 / NCTC 10110) (Mycoplasma hyopneumoniae).